Consider the following 545-residue polypeptide: Tetrahydrocannabinolic acid synthase (545 aa).

The signal sequence occupies residues 1–28 (MNCSAFSFWFVCKIIFFFLSFHIQISIA). An intrachain disulfide couples Cys37 to Cys99. N-linked (GlcNAc...) asparagine glycans are attached at residues Asn65 and Asn89. Residues 77–251 (TTPKPLVIVT…AAWKIKLVAV (175 aa)) enclose the FAD-binding PCMH-type domain. FAD-binding positions include 109–115 (TRSGGHD) and Ser120. Residues 114–176 (HDAEGMSYIS…ENLSFPGGYC (63 aa)) constitute a cross-link (6-(S-cysteinyl)-8alpha-(pros-histidyl)-FAD (His-Cys)). An N-linked (GlcNAc...) asparagine glycan is attached at Asn168. Residues Cys176, 180–184 (GVGGH), Tyr190, Glu236, and Ile241 each bind FAD. Position 292 (His292) interacts with cannabigerolate. Asn297, Asn305, and Asn329 each carry an N-linked (GlcNAc...) asparagine glycan. Cannabigerolate is bound by residues Tyr417 and Glu442. A glycan (N-linked (GlcNAc...) asparagine) is linked at Asn467. 481–483 (YLN) contributes to the FAD binding site. Tyr484 acts as the Proton acceptor in catalysis. An N-linked (GlcNAc...) asparagine glycan is attached at Asn499.

It belongs to the oxygen-dependent FAD-linked oxidoreductase family. Monomer. It depends on FAD as a cofactor. Post-translationally, glycosylated when produced in a heterologous system. The deglycosylated THCA synthase has more catalytic activity than the glycosylated form. In terms of processing, the FAD cofactor is bound via a bicovalent 6-S-cysteinyl, 8alpha-N1-histidyl FAD linkage. Expressed in the secretory cells of glandular trichomes.

It is found in the secreted. The protein localises to the extracellular space. The protein resides in the apoplast. The catalysed reaction is cannabigerolate + O2 = Delta(9)-tetrahydrocannabinolate + H2O2. It participates in secondary metabolite biosynthesis; terpenoid biosynthesis. Inhibited by Hg(2+). In terms of biological role, oxidoreductase involved in the biosynthesis of cannabinoids-related terpenophenolic natural products, which have pharmacological activity. Catalyzes the oxidative cyclization of the monoterpene moiety in cannabigerolic acid (CBGA), producing delta(9)-tetrahydrocannabinolate (THCA), the major cannabioid in drug-type Cannabis plants. Can also use cannabinerolic acid as substrate, but not cannabigerol or cannabinerol. The chain is Tetrahydrocannabinolic acid synthase from Cannabis sativa (Hemp).